Here is a 321-residue protein sequence, read N- to C-terminus: Annexin A5 (321 aa).

Annexin repeat units lie at residues 15–86, 87–158, 170–242, and 246–317; these read FDAR…SLMR, PARI…VLLQ, ALVE…AVVK, and SVPA…LLCG.

Belongs to the annexin family.

Functionally, collagen-binding protein. This Gallus gallus (Chicken) protein is Annexin A5 (ANXA5).